Reading from the N-terminus, the 187-residue chain is uncharacterized protein (187 aa).

Residues 42–63 (RTNGPGKDSFSFSTSGSKPSSS) form a disordered region. The span at 50–63 (SFSFSTSGSKPSSS) shows a compositional bias: low complexity.

This is an uncharacterized protein from Saccharomyces cerevisiae (strain ATCC 204508 / S288c) (Baker's yeast).